Reading from the N-terminus, the 315-residue chain is Aldo-keto reductase family 4 member C11 (315 aa).

Ala2 bears the N-acetylalanine mark. Residues 23–24 and Asp47 contribute to the NADP(+) site; that span reads TW. Tyr52 (proton donor) is an active-site residue. NADP(+) contacts are provided by residues His114, 158–159, Gln180, 207–213, 256–258, and 262–266; these read SN, SPLGSPG, KST, and RIREN. Residue Ser295 is modified to Phosphoserine.

It belongs to the aldo/keto reductase family.

In terms of biological role, oxidoreductase that may act on a broad range of substrates such as ketosteroids, aldehydes, ketones and sugars. This is Aldo-keto reductase family 4 member C11 (AKR4C11) from Arabidopsis thaliana (Mouse-ear cress).